Here is a 307-residue protein sequence, read N- to C-terminus: UDP-3-O-acyl-N-acetylglucosamine deacetylase (307 aa).

Histidine 80, histidine 239, and aspartate 243 together coordinate Zn(2+). The active-site Proton donor is histidine 266.

This sequence belongs to the LpxC family. It depends on Zn(2+) as a cofactor.

The enzyme catalyses a UDP-3-O-[(3R)-3-hydroxyacyl]-N-acetyl-alpha-D-glucosamine + H2O = a UDP-3-O-[(3R)-3-hydroxyacyl]-alpha-D-glucosamine + acetate. Its pathway is glycolipid biosynthesis; lipid IV(A) biosynthesis; lipid IV(A) from (3R)-3-hydroxytetradecanoyl-[acyl-carrier-protein] and UDP-N-acetyl-alpha-D-glucosamine: step 2/6. Catalyzes the hydrolysis of UDP-3-O-myristoyl-N-acetylglucosamine to form UDP-3-O-myristoylglucosamine and acetate, the committed step in lipid A biosynthesis. This chain is UDP-3-O-acyl-N-acetylglucosamine deacetylase, found in Neisseria meningitidis serogroup C (strain 053442).